A 228-amino-acid polypeptide reads, in one-letter code: R-spondin-4 (228 aa).

Positions 1–19 (MRAPLCLLLLLAHAVDMLA) are cleaved as a signal peptide. N-linked (GlcNAc...) asparagine glycosylation is present at asparagine 34. Disulfide bonds link cysteine 35-cysteine 41, cysteine 38-cysteine 47, cysteine 50-cysteine 69, cysteine 73-cysteine 88, cysteine 91-cysteine 98, cysteine 95-cysteine 104, cysteine 107-cysteine 118, cysteine 122-cysteine 135, cysteine 139-cysteine 181, cysteine 150-cysteine 157, and cysteine 190-cysteine 196. The stretch at 85–128 (ANRCKKCGATCESCFSQDFCIRCKRRFHLYKGKCLPSCPPGTLT) is one FU repeat. In terms of domain architecture, TSP type-1 spans 138-197 (ECEPSPWGSWSPCIHNGKTCGSGWGLETRVREAGPAKQEETASCRVLSESRKCPIKRLCP). Residues 193-228 (KRLCPGERNPRQKNRKDRRQRKDRKLERRPHQRGSQ) are disordered. Basic residues predominate over residues 203-228 (RQKNRKDRRQRKDRKLERRPHQRGSQ).

It belongs to the R-spondin family. As to quaternary structure, binds heparin. Interacts with LGR4, LGR5 and LGR6.

The protein localises to the secreted. Activator of the canonical Wnt signaling pathway by acting as a ligand for LGR4-6 receptors. Upon binding to LGR4-6 (LGR4, LGR5 or LGR6), LGR4-6 associate with phosphorylated LRP6 and frizzled receptors that are activated by extracellular Wnt receptors, triggering the canonical Wnt signaling pathway to increase expression of target genes. Also regulates the canonical Wnt/beta-catenin-dependent pathway and non-canonical Wnt signaling by acting as an inhibitor of ZNRF3, an important regulator of the Wnt signaling pathway. In Mus musculus (Mouse), this protein is R-spondin-4 (Rspo4).